Here is a 474-residue protein sequence, read N- to C-terminus: tRNA-2-methylthio-N(6)-dimethylallyladenosine synthase (474 aa).

The MTTase N-terminal domain maps to 3 to 120; that stretch reads KKLHIKTWGC…LPEMIDQIEA (118 aa). 6 residues coordinate [4Fe-4S] cluster: C12, C49, C83, C157, C161, and C164. Residues 143–375 form the Radical SAM core domain; it reads RADGPSAFVS…QDRITQQAMR (233 aa). Residues 378–441 enclose the TRAM domain; it reads RQMLGTVQRI…TNSLRGNFIR (64 aa).

The protein belongs to the methylthiotransferase family. MiaB subfamily. Monomer. It depends on [4Fe-4S] cluster as a cofactor.

The protein resides in the cytoplasm. It catalyses the reaction N(6)-dimethylallyladenosine(37) in tRNA + (sulfur carrier)-SH + AH2 + 2 S-adenosyl-L-methionine = 2-methylsulfanyl-N(6)-dimethylallyladenosine(37) in tRNA + (sulfur carrier)-H + 5'-deoxyadenosine + L-methionine + A + S-adenosyl-L-homocysteine + 2 H(+). Its function is as follows. Catalyzes the methylthiolation of N6-(dimethylallyl)adenosine (i(6)A), leading to the formation of 2-methylthio-N6-(dimethylallyl)adenosine (ms(2)i(6)A) at position 37 in tRNAs that read codons beginning with uridine. The chain is tRNA-2-methylthio-N(6)-dimethylallyladenosine synthase from Shewanella woodyi (strain ATCC 51908 / MS32).